A 476-amino-acid polypeptide reads, in one-letter code: MGIKFLEVIKPFCAVLPEIQKPERKIQFREKVLWTAITLFIFLVCCQIPLFGIMSSDSADPFYWMRVILASNRGTLMELGISPIVTSGLIMQLLAGAKIIEVGDTPKDRALFNGAQKLFGMIITIGQAIVYVMTGMYGDPSEMGAGICLLIIIQLFVAGLIVLLLDELLQKGYGLGSGISLFIATNICETIVWKAFSPTTVNTGRGTEFEGAIIALFHLLATRTDKVRALREAFYRQNLPNILNLIATVFVFAVVIYFQGFRVDLPIKSARYRGQYNTYPIKLFYTSNIPIILQSALVSNLYVISQMLSTRFSGNFLVNLLGTWSDATSGGPARAYPVAGLCYYLSPPESFGSVLDDPVHAAIYIVFMLGSCAFFSKTWIEVSGSSAKDVAKQLKEQQMVMRGHRETSMVHELNRYIPTAAAFGGLCIGGLSVMADFLGAIGSGTGILLAVTIIYQYFEIFVKEQSEMGSMGALLF.

The Cytoplasmic portion of the chain corresponds to 2–33; the sequence is GIKFLEVIKPFCAVLPEIQKPERKIQFREKVL. The helical transmembrane segment at 34–53 threads the bilayer; the sequence is WTAITLFIFLVCCQIPLFGI. The Lumenal portion of the chain corresponds to 54-76; it reads MSSDSADPFYWMRVILASNRGTL. A helical membrane pass occupies residues 77–96; sequence MELGISPIVTSGLIMQLLAG. At 97–117 the chain is on the cytoplasmic side; it reads AKIIEVGDTPKDRALFNGAQK. A helical transmembrane segment spans residues 118–138; it reads LFGMIITIGQAIVYVMTGMYG. Residues 139–144 are Lumenal-facing; that stretch reads DPSEMG. The helical transmembrane segment at 145–165 threads the bilayer; that stretch reads AGICLLIIIQLFVAGLIVLLL. Topologically, residues 166-172 are cytoplasmic; the sequence is DELLQKG. A helical transmembrane segment spans residues 173–193; sequence YGLGSGISLFIATNICETIVW. Residues 194–240 lie on the Lumenal side of the membrane; it reads KAFSPTTVNTGRGTEFEGAIIALFHLLATRTDKVRALREAFYRQNLP. The helical transmembrane segment at 241-261 threads the bilayer; that stretch reads NILNLIATVFVFAVVIYFQGF. Over 262–288 the chain is Cytoplasmic; that stretch reads RVDLPIKSARYRGQYNTYPIKLFYTSN. The helical transmembrane segment at 289–309 threads the bilayer; that stretch reads IPIILQSALVSNLYVISQMLS. The Lumenal portion of the chain corresponds to 310-354; that stretch reads TRFSGNFLVNLLGTWSDATSGGPARAYPVAGLCYYLSPPESFGSV. The helical transmembrane segment at 355 to 375 threads the bilayer; that stretch reads LDDPVHAAIYIVFMLGSCAFF. At 376–420 the chain is on the cytoplasmic side; it reads SKTWIEVSGSSAKDVAKQLKEQQMVMRGHRETSMVHELNRYIPTA. A helical transmembrane segment spans residues 421 to 441; the sequence is AAFGGLCIGGLSVMADFLGAI. The Lumenal segment spans residues 442–445; that stretch reads GSGT. A helical membrane pass occupies residues 446 to 462; sequence GILLAVTIIYQYFEIFV. Residues 463–476 lie on the Cytoplasmic side of the membrane; that stretch reads KEQSEMGSMGALLF.

Belongs to the SecY/SEC61-alpha family. As to quaternary structure, the SEC61 channel-forming translocon complex consists of channel-forming core components SEC61A1, SEC61B and SEC61G and different auxiliary components such as SEC62 and SEC63. The SEC61 channel associates with the multi-pass translocon (MPT) complex.

Its subcellular location is the endoplasmic reticulum membrane. Component of SEC61 channel-forming translocon complex that mediates transport of signal peptide-containing precursor polypeptides across the endoplasmic reticulum (ER). Forms a ribosome receptor and a gated pore in the ER membrane, both functions required for cotranslational translocation of nascent polypeptides. May cooperate with auxiliary protein SEC62, SEC63 and HSPA5/BiP to enable post-translational transport of small presecretory proteins. The SEC61 channel is also involved in ER membrane insertion of transmembrane proteins: it mediates membrane insertion of the first few transmembrane segments of proteins, while insertion of subsequent transmembrane regions of multi-pass membrane proteins is mediated by the multi-pass translocon (MPT) complex. This Dissostichus mawsoni (Antarctic cod) protein is Protein transport protein Sec61 subunit alpha (sec61a).